Here is a 594-residue protein sequence, read N- to C-terminus: Protein HOTHEAD (594 aa).

Residues 1–19 (MALKLFLFALLLCLPTSLS) form the signal peptide. Position 64–91 (64–91 (DYIVIGGGTAGCPLAATLSQNFSVLVLE)) interacts with FAD. The active-site Proton acceptor is H529.

It belongs to the GMC oxidoreductase family. FAD serves as cofactor. In terms of tissue distribution, expressed in roots, leaves, stems, inflorescences and siliques. Found not only in epidermis but also in all sub-epidermal cell layers.

Functionally, probable FAD-dependent enzyme. Involved in regulating post-genital organ fusion. Required to limit cellular interactions between contacting epidermal cells during floral development. The chain is Protein HOTHEAD (HTH) from Arabidopsis thaliana (Mouse-ear cress).